Reading from the N-terminus, the 278-residue chain is Tropomyosin A (278 aa).

Residues 1–270 are a coiled coil; that stretch reads IMMAMKLEKE…YRAISGELDT (270 aa). The interval 92 to 134 is disordered; that stretch reads DFEQSSGRLTETSTKLDDASKAAEESERNRKTLETRSISDDER. Residues 95 to 104 show a composition bias toward polar residues; the sequence is QSSGRLTETS. Over residues 105–134 the composition is skewed to basic and acidic residues; the sequence is TKLDDASKAAEESERNRKTLETRSISDDER.

This sequence belongs to the tropomyosin family. In terms of assembly, homodimer.

Its function is as follows. Tropomyosin, in association with the troponin complex, plays a central role in the calcium dependent regulation of muscle contraction. The chain is Tropomyosin A from Echinococcus granulosus (Hydatid tapeworm).